A 219-amino-acid polypeptide reads, in one-letter code: Response regulator ArlR (219 aa).

Residues 3-116 (QILIVEDEQN…ELLARIRAIL (114 aa)) form the Response regulatory domain. Position 52 is a 4-aspartylphosphate (aspartate 52). A DNA-binding region (ompR/PhoB-type) is located at residues 122 to 219 (KDIIDVNGIT…TVRGVGYVIR (98 aa)).

In terms of processing, phosphorylated by ArlS.

The protein resides in the cytoplasm. Its function is as follows. Member of the two-component regulatory system ArlS/ArlR involved in the regulation of adhesion, autolysis, multidrug resistance and virulence. This is Response regulator ArlR (arlR) from Staphylococcus aureus (strain USA300).